Here is a 383-residue protein sequence, read N- to C-terminus: MAAVAPAGPGDSASAALDELSLNFTYGAPGAGNGSLSGDWYRRNQIHLFGVLLAILGNLVISISLNIQKYSHLQLAQQEHPRPYFKSVLWWGGVLLMAVGETGNFAAYGFAPITLIAPLGCVSVTGSAIISVTFLKDNLRASDLLGTTLAFAGTYLLVNFAPNITQAISARTVQYYLVGWQFLIYVILEILIFCILLYFYKRKGMKHMVILLTLVAILASLTVISVKAVSGMITFSVMDKMQLTYPIFYIMFIIMIASCVFQVKFLNQATKLYNTTTVVPVNHIFFTISAIIAGIIFYQEFLGAPFLTVFIYLFGCFLSFLGVFLVTRNREKEHLQQSYIDFGNIPGKQMLDKIQPDSHSLSYGTLPDGSDSTKSQSGEKKEV.

N-linked (GlcNAc...) asparagine glycosylation is found at asparagine 23 and asparagine 33. 7 consecutive transmembrane segments (helical) span residues 46–66, 88–108, 110–130, 144–164, 177–197, 209–229, and 243–263; these read IHLFGVLLAILGNLVISISLN, VLWWGGVLLMAVGETGNFAAY, FAPITLIAPLGCVSVTGSAII, LLGTTLAFAGTYLLVNFAPNI, LVGWQFLIYVILEILIFCILL, VILLTLVAILASLTVISVKAV, and LTYPIFYIMFIIMIASCVFQV. Asparagine 274 is a glycosylation site (N-linked (GlcNAc...) asparagine). Transmembrane regions (helical) follow at residues 278-298 and 306-326; these read VVPVNHIFFTISAIIAGIIFY and FLTVFIYLFGCFLSFLGVFLV. The segment at 355 to 383 is disordered; it reads QPDSHSLSYGTLPDGSDSTKSQSGEKKEV.

Belongs to the NIPA family.

It is found in the membrane. The polypeptide is NIPA-like protein 2 (NIPAL2) (Homo sapiens (Human)).